The primary structure comprises 458 residues: ATP synthase subunit beta (458 aa).

An ATP-binding site is contributed by 148 to 155 (GGAGVGKT).

Belongs to the ATPase alpha/beta chains family. In terms of assembly, F-type ATPases have 2 components, CF(1) - the catalytic core - and CF(0) - the membrane proton channel. CF(1) has five subunits: alpha(3), beta(3), gamma(1), delta(1), epsilon(1). CF(0) has three main subunits: a(1), b(2) and c(9-12). The alpha and beta chains form an alternating ring which encloses part of the gamma chain. CF(1) is attached to CF(0) by a central stalk formed by the gamma and epsilon chains, while a peripheral stalk is formed by the delta and b chains.

Its subcellular location is the cell inner membrane. It carries out the reaction ATP + H2O + 4 H(+)(in) = ADP + phosphate + 5 H(+)(out). Produces ATP from ADP in the presence of a proton gradient across the membrane. The catalytic sites are hosted primarily by the beta subunits. This is ATP synthase subunit beta from Pseudomonas fluorescens (strain Pf0-1).